The primary structure comprises 101 residues: Small ribosomal subunit protein uS14 (101 aa).

This sequence belongs to the universal ribosomal protein uS14 family. In terms of assembly, part of the 30S ribosomal subunit. Contacts proteins S3 and S10.

In terms of biological role, binds 16S rRNA, required for the assembly of 30S particles and may also be responsible for determining the conformation of the 16S rRNA at the A site. The polypeptide is Small ribosomal subunit protein uS14 (Albidiferax ferrireducens (strain ATCC BAA-621 / DSM 15236 / T118) (Rhodoferax ferrireducens)).